We begin with the raw amino-acid sequence, 301 residues long: MNLPDNSIHLQLPRPVCEAIIRPVPEHRADQELSEIYRDLKATFGVPWVGVITQAVAYYRPFFAEAWRRFAPSAKTHFFERASDDIRIRSWELMGQSFVIEGQTDRLREMGYSVREIGQIRAVLDIFDYGNPKYLIFATAIKEGLLSGRTFGGAAGDARCHFPRSPICQIDPIPVMVEEHHAGGTLSQVYADIKQTLQLPFINSDYKAMARWPSYLEQAWGALKPCIDTPAYQAGRFDINARALAALDALPTAYRMSRDDALQAGLSEAQTDELIQVISLFQWMLSGLVLNVTHFKQQALK.

The protein belongs to the HAD-like hydrolase superfamily. S-2-haloalkanoic acid dehalogenase family. As to quaternary structure, homotetramer.

It catalyses the reaction an (R)-2-haloacid + H2O = a (2S)-2-hydroxycarboxylate + a halide anion + H(+). Its function is as follows. Catalyzes the hydrolytic dehalogenation of small (R)-2-haloalkanoic acids to yield the corresponding (S)-2-hydroxyalkanoic acids. Acts on acids of short chain lengths, C(2) to C(4), with inversion of configuration at C-2. The protein is (R)-2-haloacid dehalogenase (hadD) of Pseudomonas putida (Arthrobacter siderocapsulatus).